The chain runs to 245 residues: Probable phosphatase PC1_1798 (245 aa).

H7, H9, H15, H40, E73, H101, H131, D192, and H194 together coordinate Zn(2+).

The protein belongs to the PHP family. Homotrimer. The cofactor is Zn(2+).

The chain is Probable phosphatase PC1_1798 from Pectobacterium carotovorum subsp. carotovorum (strain PC1).